A 574-amino-acid chain; its full sequence is ATP-dependent lipid A-core flippase (574 aa).

4 helical membrane-spanning segments follow: residues L11–I31, W60–G80, Y156–V176, and L244–A264. The ABC transmembrane type-1 domain maps to L23–R304. The 236-residue stretch at V335 to R570 folds into the ABC transporter domain. G368–T375 lines the ATP pocket.

It belongs to the ABC transporter superfamily. Lipid exporter (TC 3.A.1.106) family. Homodimer.

The protein resides in the cell inner membrane. It carries out the reaction ATP + H2O + lipid A-core oligosaccharideSide 1 = ADP + phosphate + lipid A-core oligosaccharideSide 2.. Its function is as follows. Involved in lipopolysaccharide (LPS) biosynthesis. Translocates lipid A-core from the inner to the outer leaflet of the inner membrane. Transmembrane domains (TMD) form a pore in the inner membrane and the ATP-binding domain (NBD) is responsible for energy generation. The chain is ATP-dependent lipid A-core flippase from Acinetobacter baylyi (strain ATCC 33305 / BD413 / ADP1).